We begin with the raw amino-acid sequence, 465 residues long: Auxin transporter-like protein 3 (465 aa).

The Cytoplasmic segment spans residues 1–52 (MTSEKVETVVAGNYLEMEREEEGSKSTTGKLSKFFWHGGSVYDAWFSCASNQ). Residues 53 to 70 (VAQVLLTLPYSFSQLGML) form a helical membrane-spanning segment. Residues 71 to 72 (SG) are Extracellular-facing. A helical transmembrane segment spans residues 73-93 (ILFQIFYGLMGSWTAYIISVL). Residues 94–129 (YVEYRTRKEREKVDFRNHVIQWFEVLDGLLGKHWRN) lie on the Cytoplasmic side of the membrane. A helical membrane pass occupies residues 130 to 150 (LGLFFNCTFLLFGSVIQLIAC). At 151 to 165 (ASNIYYINDHLDKRT) the chain is on the extracellular side. Residues 166-186 (WTYIFGACCATTVFIPSFHNY) form a helical membrane-spanning segment. Topologically, residues 187 to 189 (RIW) are cytoplasmic. Residues 190-210 (SFLGLVMTTYTAWYMTIASIL) form a helical membrane-spanning segment. Residues 211 to 225 (HGQAEDVKHSGPTKL) are Extracellular-facing. Residues 226–246 (VLYFTGATNILYTFGGHAVTV) form a helical membrane-spanning segment. Residues 247–259 (EIMHAMWKPQKFK) are Cytoplasmic-facing. Residues 260–280 (MIYLIATLYVMTLTLPSAAAV) form a helical membrane-spanning segment. Topologically, residues 281–307 (YWAFGDNLLTHSNALSLLPRTGFRDTA) are extracellular. A helical transmembrane segment spans residues 308–328 (VILMLIHQFITFGFACTPLYF). The Cytoplasmic portion of the chain corresponds to 329–349 (VWEKFLGVHETKSLLKRALVR). The chain crosses the membrane as a helical span at residues 350 to 370 (LPVVIPIWFLAIIFPFFGPIN). Over 371 to 374 (STVG) the chain is Extracellular. A helical membrane pass occupies residues 375-395 (SLLVSFTVYIIPALAHMVTFA). At 396–421 (SAPARENAVERPPSFLGGWVGLYSVN) the chain is on the cytoplasmic side. A helical transmembrane segment spans residues 422–442 (VFVAVWVLVVGFGLGGWASML). Topologically, residues 443-465 (NFVHQIKTFGLFAKCFQCPPHKA) are extracellular.

It belongs to the amino acid/polyamine transporter 2 family. Amino acid/auxin permease (AAAP) (TC 2.A.18.1) subfamily. In terms of tissue distribution, shoots and roots of nodulating plants. Low levels in roots, nodules, stems, petioles, leaves, shoot apices and flowers.

The protein localises to the cell membrane. Its function is as follows. Carrier protein involved in proton-driven auxin influx. Mediates the formation of auxin gradient from developing leaves (site of auxin biosynthesis) to tips by contributing to the loading of auxin in vascular tissues and facilitating acropetal (base to tip) auxin transport within inner tissues of the root apex, and basipetal (tip to base) auxin transport within outer tissues of the root apex. May be involved in lateral roots and nodules formation. The sequence is that of Auxin transporter-like protein 3 (LAX3) from Medicago truncatula (Barrel medic).